A 396-amino-acid polypeptide reads, in one-letter code: L-lactate dehydrogenase (396 aa).

One can recognise an FMN hydroxy acid dehydrogenase domain in the interval 1–380 (MIISAASDYR…TQDSLVQVLG (380 aa)). Y24 lines the substrate pocket. FMN is bound by residues S106 and Q127. Residue Y129 coordinates substrate. T155 serves as a coordination point for FMN. R164 lines the substrate pocket. Residue K251 coordinates FMN. The active-site Proton acceptor is the H275. R278 provides a ligand contact to substrate. 306–330 (DSGIRNGLDVVRMIALGADTVLLGR) contacts FMN.

Belongs to the FMN-dependent alpha-hydroxy acid dehydrogenase family. Requires FMN as cofactor.

Its subcellular location is the cell inner membrane. The enzyme catalyses (S)-lactate + A = pyruvate + AH2. Functionally, catalyzes the conversion of L-lactate to pyruvate. Is coupled to the respiratory chain. The chain is L-lactate dehydrogenase from Escherichia coli O45:K1 (strain S88 / ExPEC).